A 419-amino-acid chain; its full sequence is UDP-N-acetylglucosamine 1-carboxyvinyltransferase 2 (419 aa).

22-23 (KN) provides a ligand contact to phosphoenolpyruvate. R92 is a binding site for UDP-N-acetyl-alpha-D-glucosamine. C116 (proton donor) is an active-site residue. 2-(S-cysteinyl)pyruvic acid O-phosphothioketal is present on C116. UDP-N-acetyl-alpha-D-glucosamine is bound by residues 121–125 (RPIDL), D306, and I328.

This sequence belongs to the EPSP synthase family. MurA subfamily.

Its subcellular location is the cytoplasm. It carries out the reaction phosphoenolpyruvate + UDP-N-acetyl-alpha-D-glucosamine = UDP-N-acetyl-3-O-(1-carboxyvinyl)-alpha-D-glucosamine + phosphate. It functions in the pathway cell wall biogenesis; peptidoglycan biosynthesis. Cell wall formation. Adds enolpyruvyl to UDP-N-acetylglucosamine. The chain is UDP-N-acetylglucosamine 1-carboxyvinyltransferase 2 from Streptococcus pyogenes serotype M18 (strain MGAS8232).